Consider the following 1325-residue polypeptide: Protein PHYTOCHROME-DEPENDENT LATE-FLOWERING (1325 aa).

Composition is skewed to polar residues over residues 313-331 and 504-515; these read IGSTRNTQDQGSNSVSVSG and NFPQTSWNVNPG. Disordered regions lie at residues 313 to 371, 462 to 558, 593 to 616, 852 to 875, and 1160 to 1325; these read IGST…MPGL, EPFE…EFSG, ANEAMQQRQHQAQMAAKRRTNSLP, VAGQASGEASKHGNTGNTPNNSTQ, and QQQQ…GNNS. A compositionally biased stretch (basic and acidic residues) spans 518–529; that stretch reads IEKEPKKEEQFS. A compositionally biased stretch (low complexity) spans 596–607; the sequence is AMQQRQHQAQMA. Over residues 863–875 the composition is skewed to polar residues; sequence HGNTGNTPNNSTQ. The segment covering 1160–1224 has biased composition (low complexity); sequence QQQQQQQLQQ…QQQATASPLQ (65 aa). Polar residues predominate over residues 1225–1239; it reads SVLSPPQVGSPSAGI. Over residues 1240–1262 the composition is skewed to low complexity; that stretch reads TQQQLQQSSPQQMSQRTPMSPQQ. Polar residues-rich tracts occupy residues 1263–1286 and 1293–1325; these read VNQRTPMSPQISSGAMHPMSTSNL and PQLSSQTMGSVGSITNSPMELQGPKNNSAGNNS.

In terms of assembly, component of a red light-dependent nuclear complex made of PHL, PHYB and CO. Interacts directly with PHYB and CO; CO binding requires the presence of PHYB. As to expression, mostly expressed in cotyledons and leaves, both in mesophyll and vasculature cells. Also present in roots, hypocotyls and shoot apices.

The protein localises to the nucleus. It localises to the nuclear body. The protein resides in the cytoplasmic granule. Its subcellular location is the cytoplasm. In terms of biological role, triggers photoperiod-monitored flowering by repressing PHYB-dependent flowering negative regulation, probably through physical interactions with PHYB and CO. The chain is Protein PHYTOCHROME-DEPENDENT LATE-FLOWERING from Arabidopsis thaliana (Mouse-ear cress).